Consider the following 787-residue polypeptide: PAN2-PAN3 deadenylation complex subunit pan3 (787 aa).

Positions 1–20 are disordered; the sequence is MNSGLTPSPSPAVAAAGPAG. The segment covering 11-20 has biased composition (low complexity); that stretch reads PAVAAAGPAG. The C3H1-type zinc finger occupies 23 to 51; sequence GSKLKFCRYYAKDRTCFYGDECQFLHDDQ. 3 disordered regions span residues 131–162, 179–210, and 226–291; these read EATYPRMQQRMTNSSSSPSLLNDSAKPYAAHD, TMSQRRKTPNPTASEFIPKGGSTSRLSNMSQS, and GGPT…PPST. Composition is skewed to low complexity over residues 143-154 and 200-210; these read NSSSSPSLLNDS and STSRLSNMSQS. A PABPC-interacting motif-2 (PAM-2) motif is present at residues 185–200; that stretch reads KTPNPTASEFIPKGGS. Residues 265–290 are compositionally biased toward polar residues; sequence TPNPANYMVPTSASTPVTNSVSQPPS. A pseudokinase domain region spans residues 365-650; it reads QIDQADMPGV…SVNDIMPMIG (286 aa). Residues arginine 422, 471 to 478, and 545 to 546 each bind ATP; these read DFHAGSET and TK. Positions 651 to 689 form a coiled coil; sequence ARFYTQLDAAQMRNDVIEEDLAKEVQNGRLFRLLAKLGT. The interval 690–787 is knob domain; it reads INERPEFQKD…ELVAAANGQL (98 aa).

The protein belongs to the protein kinase superfamily. PAN3 family. In terms of assembly, homodimer. Forms a heterotrimer with a catalytic subunit pan2 to form the poly(A)-nuclease (PAN) deadenylation complex. Interacts (via PAM-2 motif) with poly(A)-binding protein pabpc1 (via PABC domain), conferring substrate specificity of the enzyme complex. Interacts with the GW182 family proteins tnrc6a, tnrc6b and tnrc6c.

It localises to the cytoplasm. The protein resides in the P-body. In terms of biological role, regulatory subunit of the poly(A)-nuclease (PAN) deadenylation complex, one of two cytoplasmic mRNA deadenylases involved in general and miRNA-mediated mRNA turnover. PAN specifically shortens poly(A) tails of RNA and the activity is stimulated by poly(A)-binding protein (PABP). PAN deadenylation is followed by rapid degradation of the shortened mRNA tails by the CCR4-NOT complex. Deadenylated mRNAs are then degraded by two alternative mechanisms, namely exosome-mediated 3'-5' exonucleolytic degradation, or deadenylation-dependent mRNA decaping and subsequent 5'-3' exonucleolytic degradation by XRN1. PAN3 acts as a positive regulator for PAN activity, recruiting the catalytic subunit PAN2 to mRNA via its interaction with RNA and PABP, and to miRNA targets via its interaction with GW182 family proteins. In Xenopus tropicalis (Western clawed frog), this protein is PAN2-PAN3 deadenylation complex subunit pan3.